We begin with the raw amino-acid sequence, 660 residues long: Acetyl-coenzyme A synthetase (660 aa).

Residues 197–200 and Thr-317 contribute to the CoA site; that span reads RGGK. ATP-binding positions include 397–399, 421–426, Asp-512, and Arg-528; these read GEP and DTFWQT. Ser-536 contacts CoA. Arg-539 lines the ATP pocket. Mg(2+)-binding residues include Val-550 and Val-555. Lys-625 carries the post-translational modification N6-acetyllysine.

This sequence belongs to the ATP-dependent AMP-binding enzyme family. Requires Mg(2+) as cofactor. Acetylated. Deacetylation by the SIR2-homolog deacetylase activates the enzyme.

It catalyses the reaction acetate + ATP + CoA = acetyl-CoA + AMP + diphosphate. It functions in the pathway ketone degradation; acetoin degradation. In terms of biological role, catalyzes the conversion of acetate into acetyl-CoA (AcCoA), an essential intermediate at the junction of anabolic and catabolic pathways. AcsA undergoes a two-step reaction. In the first half reaction, AcsA combines acetate with ATP to form acetyl-adenylate (AcAMP) intermediate. In the second half reaction, it can then transfer the acetyl group from AcAMP to the sulfhydryl group of CoA, forming the product AcCoA. Although acetate is the preferred substrate of AcsA, propionate is also used, but at a diminished rate compared with that of acetate. Fatty acids with more than three carbon atoms are usually not accepted as substrates by AcsA. The polypeptide is Acetyl-coenzyme A synthetase (Cupriavidus necator (strain ATCC 17699 / DSM 428 / KCTC 22496 / NCIMB 10442 / H16 / Stanier 337) (Ralstonia eutropha)).